A 286-amino-acid polypeptide reads, in one-letter code: MASPGVLEESSSGEACSGGCPEQWDEKTEEELQGQFEQAAKHVQNVASVASTEQLLFLYARYKQVKVGRCNTPKPGFFDYEGKKKWEAWKALGDYSCQQAMNEYIETVKKLDPDWSPQALEEPHKEPKTTFGGPVVSCLYKVQETLREEDKDIFDYCRENNISRVSHALSTGAIDVNVADDEGRCLLHWACDRGHTQLVSVLLFHNAHINMQDSEGQTPLHYASACEFPDIVDLLLDHGADPSLVDNDGFQPHEVTDSKNIAAMLQQHASYGEHNKPASLLLEMPQ.

A disordered region spans residues 1 to 24 (MASPGVLEESSSGEACSGGCPEQW). Positions 8–22 (EESSSGEACSGGCPE) are enriched in low complexity. An ACB domain is found at 32-117 (LQGQFEQAAK…VKKLDPDWSP (86 aa)). An acyl-CoA is bound by residues 59 to 63 (YARYK), lysine 85, and tyrosine 104. 2 ANK repeats span residues 182–211 (EGRC…HINM) and 215–244 (EGQT…DPSL).

Its subcellular location is the cytoplasm. The protein resides in the nucleus. Binds long-chain acyl-coenzyme A molecules with a strong preference for unsaturated C18:1-CoA. Does not bind fatty acids. Plays a role in protein N-myristoylation. In Xenopus tropicalis (Western clawed frog), this protein is Acyl-CoA-binding domain-containing protein 6 (acbd6).